Consider the following 172-residue polypeptide: MQPQGAIFVALPHLGPILVSLLTRHRMIRWYDIPKKPPWCPPHKVLLAGWITIYFVMGYASYLVWKDLGGGFGRPLALPLGLYAVQLAVSWAVLIFFFAAHAHGLALLHMLLLYGLVVSTALIWHPINKLAAVLLLPYLAWLTVTASIAYHLWRDSLCPNHHQPLPMGEKRD.

5 helical membrane passes run 3–23 (PQGAIFVALPHLGPILVSLLT), 45–65 (VLLAGWITIYFVMGYASYLVW), 80–100 (LGLYAVQLAVSWAVLIFFFAA), 104–124 (GLALLHMLLLYGLVVSTALIW), and 130–150 (LAAVLLLPYLAWLTVTASIAY).

The protein belongs to the TspO/BZRP family. In terms of assembly, homotetramer. May also form homodimer. Expressed in erythrocytes (at protein level).

It is found in the endoplasmic reticulum membrane. The protein resides in the cell membrane. Functionally, cholesterol-binding protein involved in the redistribution of cholesterol from lipid droplets to the endoplasmic reticulum. Required to meet cholesterol demands during erythropoietic differentiation. May play a role in transport processes at the plasma membrane of erythrocytes, including regulating VDAC-mediated ATP export, and import of the heme precursors protoporphyrin IX and 5-aminolevulinic acid. In Canis lupus familiaris (Dog), this protein is Translocator protein 2.